The following is a 415-amino-acid chain: Runt-related transcription factor 3 (415 aa).

Disordered regions lie at residues M1–A48, G176–P266, and N375–Y415. The Runt domain maps to S54–R182. The span at K186–R205 shows a compositional bias: basic and acidic residues. A Glycyl lysine isopeptide (Lys-Gly) (interchain with G-Cter in SUMO2) cross-link involves residue K192. Positions T209 to N240 are enriched in polar residues. S243 carries the post-translational modification Phosphoserine. Residues S393 to S402 show a composition bias toward polar residues. Basic and acidic residues predominate over residues R406 to Y415.

As to quaternary structure, heterodimer with CBFB. RUNX3 binds DNA as a monomer and through the Runt domain. DNA-binding is increased by heterodimerization. Interacts with TLE1 and SUV39H1. The tyrosine phosphorylated form (via runt domain) interacts with SRC (via protein kinase domain). Interacts with FYN and LCK. Interacts with FOXP3. Interacts with ZFHX3. Interacts with TBX21. Post-translationally, phosphorylated on tyrosine residues by SRC. Phosphorylated by LCK and FYN. In terms of tissue distribution, expressed in gastric cancer tissues (at protein level).

Its subcellular location is the nucleus. It is found in the cytoplasm. In terms of biological role, forms the heterodimeric complex core-binding factor (CBF) with CBFB. RUNX members modulate the transcription of their target genes through recognizing the core consensus binding sequence 5'-TGTGGT-3', or very rarely, 5'-TGCGGT-3', within their regulatory regions via their runt domain, while CBFB is a non-DNA-binding regulatory subunit that allosterically enhances the sequence-specific DNA-binding capacity of RUNX. The heterodimers bind to the core site of a number of enhancers and promoters, including murine leukemia virus, polyomavirus enhancer, T-cell receptor enhancers, LCK, IL3 and GM-CSF promoters. May be involved in the control of cellular proliferation and/or differentiation. In association with ZFHX3, up-regulates CDKN1A promoter activity following TGF-beta stimulation. CBF complexes repress ZBTB7B transcription factor during cytotoxic (CD8+) T cell development. They bind to RUNX-binding sequence within the ZBTB7B locus acting as transcriptional silencer and allowing for cytotoxic T cell differentiation. CBF complexes binding to the transcriptional silencer is essential for recruitment of nuclear protein complexes that catalyze epigenetic modifications to establish epigenetic ZBTB7B silencing. Necessary for the development and survival of sensory neurons expressing parvalbumin. The protein is Runt-related transcription factor 3 (RUNX3) of Homo sapiens (Human).